The primary structure comprises 76 residues: Probable insulin-like peptide alpha-type 1 (76 aa).

An N-terminal signal peptide occupies residues 1–24 (MKTYSFFVLFIVFIFFISSSKSHS). Intrachain disulfides connect Cys-32–Cys-60, Cys-44–Cys-73, and Cys-48–Cys-74.

This sequence belongs to the insulin family.

It localises to the secreted. The chain is Probable insulin-like peptide alpha-type 1 (ins-21) from Caenorhabditis elegans.